A 1087-amino-acid polypeptide reads, in one-letter code: Platelet-derived growth factor receptor alpha (1087 aa).

The signal sequence occupies residues 1 to 24 (MMPAMRASLILGCLLIIGPWAILA). Residues 25–530 (ENPLPTIFPD…PTLRSELTVA (506 aa)) lie on the Extracellular side of the membrane. 2 consecutive Ig-like C2-type domains span residues 27-114 (PLPT…SEIE) and 118-211 (IYIY…LQTW). Cys50 and Cys101 form a disulfide bridge. 2 N-linked (GlcNAc...) asparagine glycosylation sites follow: Asn77 and Asn104. A disulfide bridge links Cys151 with Cys192. N-linked (GlcNAc...) asparagine glycosylation is found at Asn216, Asn282, Asn309, Asn356, Asn362, Asn461, and Asn471. 3 consecutive Ig-like C2-type domains span residues 217–309 (ISVE…KKTN), 315–409 (KGFI…KSYS), and 417–519 (PALI…LKLV). Cysteines 238 and 293 form a disulfide. A disulfide bridge connects residues Cys438 and Cys503. The helical transmembrane segment at 531 to 551 (AAVLVLLVIVIISLIVLVIIW) threads the bilayer. The Cytoplasmic portion of the chain corresponds to 552-1087 (KQKPRYEIRW…SSDLVEDSFL (536 aa)). Tyr574 and Tyr576 each carry phosphotyrosine; by autocatalysis. Positions 595–970 (LVLGRILGSG…CYETVLHDFL (376 aa)) constitute a Protein kinase domain. ATP-binding positions include 601 to 609 (LGSGAFGKV) and Lys629. Tyr722, Tyr733, Tyr744, Tyr756, and Tyr764 each carry phosphotyrosine; by autocatalysis. Residue Asp818 is the Proton acceptor of the active site. Residues Tyr849, Tyr988, and Tyr1017 each carry the phosphotyrosine; by autocatalysis modification. Positions 1017 to 1064 (YIIPLPDIDPVSEDESGKRNRHSSQTSEESAIETGSSSSTFIKRDDET) are disordered. Polar residues predominate over residues 1039–1057 (SSQTSEESAIETGSSSSTF).

This sequence belongs to the protein kinase superfamily. Tyr protein kinase family. CSF-1/PDGF receptor subfamily. Interacts with homodimeric pdgfa, pdgfb and pdgfc, and with heterodimers formed by pdgfa and pdgfb. Monomer in the absence of bound ligand. Interaction with dimeric pdgfa, pdgfb and/or pdgfc leads to receptor dimerization, where both pdgfra homodimers and heterodimers with pdgfrb are observed. Ubiquitinated, leading to its internalization and degradation. Post-translationally, autophosphorylated on tyrosine residues upon ligand binding. Autophosphorylation occurs in trans, i.e. one subunit of the dimeric receptor phosphorylates tyrosine residues on the other subunit.

It is found in the cell membrane. The protein resides in the cell projection. Its subcellular location is the cilium. The protein localises to the golgi apparatus. The catalysed reaction is L-tyrosyl-[protein] + ATP = O-phospho-L-tyrosyl-[protein] + ADP + H(+). Its activity is regulated as follows. Present in an inactive conformation in the absence of bound ligand. Binding of pdgfa and/or pdgfb leads to dimerization and activation by autophosphorylation on tyrosine residues. Tyrosine-protein kinase that acts as a cell-surface receptor for pdgfa, pdgfb and pdgfc and plays an essential role in the regulation of embryonic development, cell proliferation, survival and chemotaxis. Depending on the context, promotes or inhibits cell proliferation and cell migration. Plays an important role in the differentiation of bone marrow-derived mesenchymal stem cells. Required for normal skeleton development. Required for normal development of the gastrointestinal tract. Plays a role in cell migration and chemotaxis in wound healing. Plays a role in platelet activation, secretion of agonists from platelet granules, and in thrombin-induced platelet aggregation. Binding of its cognate ligands - homodimeric pdgfa, homodimeric pdgfb, heterodimers formed by pdgfa and pdgfb or homodimeric pdgfc -leads to the activation of several signaling cascades; the response depends on the nature of the bound ligand and is modulated by the formation of heterodimers between pdgfra and pdgfrb. Phosphorylates pik3r1, plcg1, and ptpn11. Activation of plcg1 leads to the production of the cellular signaling molecules diacylglycerol and inositol 1,4,5-trisphosphate, mobilization of cytosolic Ca(2+) and the activation of protein kinase C. Phosphorylates pik3r1, the regulatory subunit of phosphatidylinositol 3-kinase, and thereby mediates activation of the akt1 signaling pathway. Mediates activation of hras and of the MAP kinases mapk1/erk2 and/or mapk3/erk1. Promotes activation of stat family members stat1, stat3 and stat5a and/or stat5b. Receptor signaling is down-regulated by protein phosphatases that dephosphorylate the receptor and its down-stream effectors, and by rapid internalization of the activated receptor. This Xenopus laevis (African clawed frog) protein is Platelet-derived growth factor receptor alpha (pdgfra).